Reading from the N-terminus, the 108-residue chain is uncharacterized protein (108 aa).

The segment covering 48–73 (NSNIPSSSSSSPSFASFFSSTSTSAT) has biased composition (low complexity). The segment at 48–81 (NSNIPSSSSSSPSFASFFSSTSTSATLNGSSNNK) is disordered.

This is an uncharacterized protein from Dictyostelium discoideum (Social amoeba).